The following is a 322-amino-acid chain: MRYSKIVSLGAYRGERDVYNDELIGPINSSDEWIRRRTGIISRKRALSGTTVVDMAYAASKEALNDAQMRPEDIDLILVATITHFGHTPSVAAHVGFRIGVQDAILLDINAACAGFSYAIFQADLMIKSGVASRALVIGVDKLSEFIDPLDRTISFLLADGAGAAILVGSTSMGIGKTVCGGNPGQLESVGLTGSTTDVKSGSAWPTLRQEGSSIFRWAVWQMAKVAKQILDINQVQPGDLNAFIPHQANIRIIDELAKQIGLEENVLIAQDICKTGNTSSASIPLAMHSLIKGNPSLSGELALQIGFGAGLVYAGQTVVMP.

Catalysis depends on residues Cys113 and His247. The tract at residues 248–252 (QANIR) is ACP-binding. Asn278 is a catalytic residue.

The protein belongs to the thiolase-like superfamily. FabH family. Homodimer.

The protein localises to the cytoplasm. The catalysed reaction is malonyl-[ACP] + acetyl-CoA + H(+) = 3-oxobutanoyl-[ACP] + CO2 + CoA. Its pathway is lipid metabolism; fatty acid biosynthesis. In terms of biological role, catalyzes the condensation reaction of fatty acid synthesis by the addition to an acyl acceptor of two carbons from malonyl-ACP. Catalyzes the first condensation reaction which initiates fatty acid synthesis and may therefore play a role in governing the total rate of fatty acid production. Possesses both acetoacetyl-ACP synthase and acetyl transacylase activities. Its substrate specificity determines the biosynthesis of branched-chain and/or straight-chain of fatty acids. The sequence is that of Beta-ketoacyl-[acyl-carrier-protein] synthase III from Tropheryma whipplei (strain TW08/27) (Whipple's bacillus).